A 139-amino-acid polypeptide reads, in one-letter code: Small ribosomal subunit protein uS12 (139 aa).

The disordered stretch occupies residues 1–44 (MPTINQLVKKPRTSKVKKSTAPALNKGYNSHKKKATDLASPQKR). Residues 9 to 18 (KKPRTSKVKK) are compositionally biased toward basic residues. Asp102 bears the 3-methylthioaspartic acid mark.

This sequence belongs to the universal ribosomal protein uS12 family. Part of the 30S ribosomal subunit. Contacts proteins S8 and S17. May interact with IF1 in the 30S initiation complex.

In terms of biological role, with S4 and S5 plays an important role in translational accuracy. Its function is as follows. Interacts with and stabilizes bases of the 16S rRNA that are involved in tRNA selection in the A site and with the mRNA backbone. Located at the interface of the 30S and 50S subunits, it traverses the body of the 30S subunit contacting proteins on the other side and probably holding the rRNA structure together. The combined cluster of proteins S8, S12 and S17 appears to hold together the shoulder and platform of the 30S subunit. The sequence is that of Small ribosomal subunit protein uS12 from Macrococcus caseolyticus (strain JCSC5402) (Macrococcoides caseolyticum).